Consider the following 165-residue polypeptide: Large ribosomal subunit protein uL10 (165 aa).

The protein belongs to the universal ribosomal protein uL10 family. In terms of assembly, part of the ribosomal stalk of the 50S ribosomal subunit. The N-terminus interacts with L11 and the large rRNA to form the base of the stalk. The C-terminus forms an elongated spine to which L12 dimers bind in a sequential fashion forming a multimeric L10(L12)X complex.

Functionally, forms part of the ribosomal stalk, playing a central role in the interaction of the ribosome with GTP-bound translation factors. The protein is Large ribosomal subunit protein uL10 of Burkholderia multivorans (strain ATCC 17616 / 249).